The primary structure comprises 2116 residues: Unconventional myosin-VIIb (2116 aa).

The 696-residue stretch at 65–760 (QGVDDMIRLG…QDTLLEVQRS (696 aa)) folds into the Myosin motor domain. ATP is bound at residue 158 to 165 (GESGAGKT). Positions 637–659 (LDQLMKILTNCQPYFIRCIKPNE) are actin-binding. 6 consecutive IQ domains span residues 745–765 (IFLR…VLDR), 763–792 (LDRA…AAVT), 786–815 (QRRA…GFER), 814–834 (ERLQ…AMRQ), 832–861 (MRQR…AVVV), and 855–884 (KRRA…NAPL). Ser904 carries the post-translational modification Phosphoserine. The tract at residues 916–1542 (EKVFGFLPAM…KKQGLLASEN (627 aa)) is mediates interaction with ANKS4B. In terms of domain architecture, MyTH4 1 spans 989–1192 (HIRRPLRYPL…PTWLELQAVK (204 aa)). One can recognise an FERM 1 domain in the interval 1197 to 1506 (IPIQVILATG…EGLKERSIFA (310 aa)). Ser1371 bears the Phosphoserine mark. The SH3 domain occupies 1501-1567 (ERSIFAMALQ…PMACLYTIPT (67 aa)). Residues 1501-2116 (ERSIFAMALQ…GSKAPALAST (616 aa)) form a mediates interaction with CDHR2, CDHR5 and USH1C region. 2 consecutive MyTH4 domains span residues 1644 to 1793 (YSCE…EAAE) and 1790 to 1896 (EAAE…KLWL). Position 1645 is a phosphoserine (Ser1645). Residues 1799–2102 (ICHKIYFPND…SYVQQLLSAM (304 aa)) form the FERM 2 domain.

The protein belongs to the TRAFAC class myosin-kinesin ATPase superfamily. Myosin family. As to quaternary structure, part of the IMAC/intermicrovillar adhesion complex/intermicrovillar tip-link complex composed of ANKS4B, MYO7B, USH1C, CDHR2 and CDHR5. Interacts with CDHR2. Interacts with CDHR5. Interacts with USH1C. Interacts with ANKS4B; requires initial interaction with USH1C. Interacts with CALML4; the interaction mediates the association of CALML4 with the IMAC/intermicrovillar adhesion complex.

The protein localises to the cytoplasm. It is found in the cytoskeleton. The protein resides in the cell projection. Its subcellular location is the microvillus. Functionally, myosins are actin-based motor molecules with ATPase activity. Their highly divergent tails are presumed to bind to membranous compartments, which would be moved relative to actin filaments. As part of the intermicrovillar adhesion complex/IMAC plays a role in epithelial brush border differentiation, controlling microvilli organization and length. May link the complex to the actin core bundle of microvilli. The polypeptide is Unconventional myosin-VIIb (Homo sapiens (Human)).